A 365-amino-acid polypeptide reads, in one-letter code: Phosphate acyltransferase (365 aa).

The protein belongs to the PlsX family. As to quaternary structure, homodimer. Probably interacts with PlsY.

Its subcellular location is the cytoplasm. The catalysed reaction is a fatty acyl-[ACP] + phosphate = an acyl phosphate + holo-[ACP]. Its pathway is lipid metabolism; phospholipid metabolism. Its function is as follows. Catalyzes the reversible formation of acyl-phosphate (acyl-PO(4)) from acyl-[acyl-carrier-protein] (acyl-ACP). This enzyme utilizes acyl-ACP as fatty acyl donor, but not acyl-CoA. This is Phosphate acyltransferase from Jannaschia sp. (strain CCS1).